The sequence spans 104 residues: Integration host factor subunit alpha (104 aa).

This sequence belongs to the bacterial histone-like protein family. In terms of assembly, heterodimer of an alpha and a beta chain.

Functionally, this protein is one of the two subunits of integration host factor, a specific DNA-binding protein that functions in genetic recombination as well as in transcriptional and translational control. This is Integration host factor subunit alpha from Bartonella quintana (strain Toulouse) (Rochalimaea quintana).